Consider the following 80-residue polypeptide: UPF0180 protein GK1051 (80 aa).

The protein belongs to the UPF0180 family.

The protein is UPF0180 protein GK1051 of Geobacillus kaustophilus (strain HTA426).